Reading from the N-terminus, the 414-residue chain is tRNA methyltransferase 10 homolog C (414 aa).

The transit peptide at 1 to 35 (MNVTVRFLRPFARCLVPYTFHRKRSHLYSGVLQRY) directs the protein to the mitochondrion. Ser79 carries the phosphoserine modification. The stretch at 133-171 (GKEKAKKAKQVKKEMKAEAREEAKRARLLETTAEEQQQD) forms a coiled coil. Residues 186-378 (LGWKGVQAMQ…KFVPRRKHTG (193 aa)) enclose the SAM-dependent MTase TRM10-type domain.

Belongs to the class IV-like SAM-binding methyltransferase superfamily. TRM10 family. Component of mitochondrial ribonuclease P, a complex composed of TRMT10C/MRPP1, HSD17B10/MRPP2 and PRORP/MRPP3. Interacts with HSD17B10/MRPP2; forming the MRPP1-MRPP2 subcomplex of the mitochondrial ribonuclease P complex. Interacts with GRSF1.

It is found in the mitochondrion matrix. The protein resides in the mitochondrion nucleoid. The catalysed reaction is adenosine(9) in tRNA + S-adenosyl-L-methionine = N(1)-methyladenosine(9) in tRNA + S-adenosyl-L-homocysteine + H(+). It carries out the reaction guanosine(9) in tRNA + S-adenosyl-L-methionine = N(1)-methylguanosine(9) in tRNA + S-adenosyl-L-homocysteine + H(+). It catalyses the reaction an adenosine in mRNA + S-adenosyl-L-methionine = an N(1)-methyladenosine in mRNA + S-adenosyl-L-homocysteine + H(+). Mitochondrial tRNA N(1)-methyltransferase involved in mitochondrial tRNA maturation. Component of mitochondrial ribonuclease P, a complex composed of TRMT10C/MRPP1, HSD17B10/MRPP2 and PRORP/MRPP3, which cleaves tRNA molecules in their 5'-ends. Together with HSD17B10/MRPP2, forms a subcomplex of the mitochondrial ribonuclease P, named MRPP1-MRPP2 subcomplex, which displays functions that are independent of the ribonuclease P activity. The MRPP1-MRPP2 subcomplex catalyzes the formation of N(1)-methylguanine and N(1)-methyladenine at position 9 (m1G9 and m1A9, respectively) in tRNAs; TRMT10C/MRPP1 acting as the catalytic N(1)-methyltransferase subunit. The MRPP1-MRPP2 subcomplex also acts as a tRNA maturation platform: following 5'-end cleavage by the mitochondrial ribonuclease P complex, the MRPP1-MRPP2 subcomplex enhances the efficiency of 3'-processing catalyzed by ELAC2, retains the tRNA product after ELAC2 processing and presents the nascent tRNA to the mitochondrial CCA tRNA nucleotidyltransferase TRNT1 enzyme. In addition to tRNA N(1)-methyltransferase activity, TRMT10C/MRPP1 also acts as a mRNA N(1)-methyltransferase by mediating methylation of adenosine residues at the N(1) position of MT-ND5 mRNA. Associates with mitochondrial DNA complexes at the nucleoids to initiate RNA processing and ribosome assembly. In Mus musculus (Mouse), this protein is tRNA methyltransferase 10 homolog C.